The chain runs to 187 residues: UPF0301 protein YqgE (187 aa).

It belongs to the UPF0301 (AlgH) family.

In Escherichia coli O139:H28 (strain E24377A / ETEC), this protein is UPF0301 protein YqgE.